We begin with the raw amino-acid sequence, 259 residues long: Phosphatidate cytidylyltransferase (259 aa).

A run of 7 helical transmembrane segments spans residues 31-51, 69-89, 103-123, 129-149, 170-190, 193-213, and 236-256; these read LVIFLPKSLFLLVILFLCFAI, PLVLLTYYFADPLVFPLIGLL, FFKSTFLLFYPALFLVYLIKI, YYLLIFIFGIWINDVFAYYIG, FLGGVLFGSLFFALTLPYGIL, FLLGTFVLTVGVAGDYFKSFI, and FDALVFSAPVFYLIMCAGELN.

The protein belongs to the CDS family.

Its subcellular location is the cell membrane. The enzyme catalyses a 1,2-diacyl-sn-glycero-3-phosphate + CTP + H(+) = a CDP-1,2-diacyl-sn-glycerol + diphosphate. It functions in the pathway phospholipid metabolism; CDP-diacylglycerol biosynthesis; CDP-diacylglycerol from sn-glycerol 3-phosphate: step 3/3. The protein is Phosphatidate cytidylyltransferase (cdsA) of Aquifex aeolicus (strain VF5).